The chain runs to 527 residues: Pentatricopeptide repeat-containing protein At5g41170, mitochondrial (527 aa).

The transit peptide at 1–35 (MAMRFFQLHRNRLVKGNSGKALSFSRLLDLSFWVR) directs the protein to the mitochondrion. PPR repeat units lie at residues 36–70 (AFCN…RPLP), 71–105 (SIID…GVSH), 106–140 (DLYT…GFEP), 141–175 (DIVT…GIKP), 176–210 (DVVM…GIRP), 211–245 (DVVM…KIKP), 246–280 (DVIT…SIAP), 281–315 (NIFT…GCFP), 316–350 (DVVA…GLTG), 351–385 (NTIT…GVPP), 386–420 (NIRT…EMDG), 424–458 (NIWT…EMDI), 459–493 (GIIT…GVKP), and 494–527 (NVVT…DGVS).

It belongs to the PPR family. P subfamily.

The protein resides in the mitochondrion. In Arabidopsis thaliana (Mouse-ear cress), this protein is Pentatricopeptide repeat-containing protein At5g41170, mitochondrial.